The sequence spans 180 residues: ATP synthase subunit b (180 aa).

A helical transmembrane segment spans residues 15-35 (LIPEVPELVIGLLAFAIVFFV).

Belongs to the ATPase B chain family. F-type ATPases have 2 components, F(1) - the catalytic core - and F(0) - the membrane proton channel. F(1) has five subunits: alpha(3), beta(3), gamma(1), delta(1), epsilon(1). F(0) has three main subunits: a(1), b(2) and c(10-14). The alpha and beta chains form an alternating ring which encloses part of the gamma chain. F(1) is attached to F(0) by a central stalk formed by the gamma and epsilon chains, while a peripheral stalk is formed by the delta and b chains.

The protein localises to the cell membrane. Its function is as follows. F(1)F(0) ATP synthase produces ATP from ADP in the presence of a proton or sodium gradient. F-type ATPases consist of two structural domains, F(1) containing the extramembraneous catalytic core and F(0) containing the membrane proton channel, linked together by a central stalk and a peripheral stalk. During catalysis, ATP synthesis in the catalytic domain of F(1) is coupled via a rotary mechanism of the central stalk subunits to proton translocation. Component of the F(0) channel, it forms part of the peripheral stalk, linking F(1) to F(0). The sequence is that of ATP synthase subunit b from Streptomyces avermitilis (strain ATCC 31267 / DSM 46492 / JCM 5070 / NBRC 14893 / NCIMB 12804 / NRRL 8165 / MA-4680).